Reading from the N-terminus, the 478-residue chain is JmjC domain-containing histone demethylation protein 1 (478 aa).

A PHD-type zinc finger spans residues serine 5 to lysine 68. The region spanning serine 217–arginine 383 is the JmjC domain. Threonine 266 contributes to the substrate binding site. Fe cation is bound by residues histidine 269 and aspartate 271. Lysine 286 lines the substrate pocket. Fe cation is bound at residue histidine 351.

Belongs to the JHDM1 histone demethylase family. The cofactor is Fe(2+).

It localises to the nucleus. The catalysed reaction is N(6),N(6)-dimethyl-L-lysyl(36)-[histone H3] + 2 2-oxoglutarate + 2 O2 = L-lysyl(36)-[histone H3] + 2 formaldehyde + 2 succinate + 2 CO2. Histone demethylase that specifically demethylates 'Lys-36' of histone H3, thereby playing a central role in histone code. The sequence is that of JmjC domain-containing histone demethylation protein 1 (JHD1) from Candida albicans (strain SC5314 / ATCC MYA-2876) (Yeast).